The chain runs to 449 residues: Probable glycine dehydrogenase (decarboxylating) subunit 1 (449 aa).

This sequence belongs to the GcvP family. N-terminal subunit subfamily. In terms of assembly, the glycine cleavage system is composed of four proteins: P, T, L and H. In this organism, the P 'protein' is a heterodimer of two subunits.

It catalyses the reaction N(6)-[(R)-lipoyl]-L-lysyl-[glycine-cleavage complex H protein] + glycine + H(+) = N(6)-[(R)-S(8)-aminomethyldihydrolipoyl]-L-lysyl-[glycine-cleavage complex H protein] + CO2. Its function is as follows. The glycine cleavage system catalyzes the degradation of glycine. The P protein binds the alpha-amino group of glycine through its pyridoxal phosphate cofactor; CO(2) is released and the remaining methylamine moiety is then transferred to the lipoamide cofactor of the H protein. This chain is Probable glycine dehydrogenase (decarboxylating) subunit 1, found in Pyrococcus abyssi (strain GE5 / Orsay).